We begin with the raw amino-acid sequence, 122 residues long: Large ribosomal subunit protein uL18 (122 aa).

This sequence belongs to the universal ribosomal protein uL18 family. Part of the 50S ribosomal subunit; part of the 5S rRNA/L5/L18/L25 subcomplex. Contacts the 5S and 23S rRNAs.

This is one of the proteins that bind and probably mediate the attachment of the 5S RNA into the large ribosomal subunit, where it forms part of the central protuberance. This is Large ribosomal subunit protein uL18 from Thermosipho melanesiensis (strain DSM 12029 / CIP 104789 / BI429).